The following is a 389-amino-acid chain: Putative 8-amino-7-oxononanoate synthase (389 aa).

Arginine 22 contacts substrate. 109 to 110 (GY) is a pyridoxal 5'-phosphate binding site. Position 134 (histidine 134) interacts with substrate. Pyridoxal 5'-phosphate-binding positions include serine 182, 207-210 (DDAH), and 238-241 (TLSK). An N6-(pyridoxal phosphate)lysine modification is found at lysine 241. A substrate-binding site is contributed by threonine 350.

This sequence belongs to the class-II pyridoxal-phosphate-dependent aminotransferase family. BioF subfamily. In terms of assembly, homodimer. The cofactor is pyridoxal 5'-phosphate.

The catalysed reaction is 6-carboxyhexanoyl-[ACP] + L-alanine + H(+) = (8S)-8-amino-7-oxononanoate + holo-[ACP] + CO2. It functions in the pathway cofactor biosynthesis; biotin biosynthesis. Its function is as follows. Catalyzes the decarboxylative condensation of pimeloyl-[acyl-carrier protein] and L-alanine to produce 8-amino-7-oxononanoate (AON), [acyl-carrier protein], and carbon dioxide. The sequence is that of Putative 8-amino-7-oxononanoate synthase (bioF) from Parvibaculum lavamentivorans (strain DS-1 / DSM 13023 / NCIMB 13966).